Reading from the N-terminus, the 156-residue chain is Lipoprotein signal peptidase (156 aa).

A helical membrane pass occupies residues 62 to 82 (GNTVFMVLSAVIIAILSYTKI). Catalysis depends on residues aspartate 115 and aspartate 133. The chain crosses the membrane as a helical span at residues 126–146 (WPAFNLADLTITCGVIVFLAM).

Belongs to the peptidase A8 family.

The protein localises to the cell inner membrane. The catalysed reaction is Release of signal peptides from bacterial membrane prolipoproteins. Hydrolyzes -Xaa-Yaa-Zaa-|-(S,diacylglyceryl)Cys-, in which Xaa is hydrophobic (preferably Leu), and Yaa (Ala or Ser) and Zaa (Gly or Ala) have small, neutral side chains.. The protein operates within protein modification; lipoprotein biosynthesis (signal peptide cleavage). In terms of biological role, this protein specifically catalyzes the removal of signal peptides from prolipoproteins. This is Lipoprotein signal peptidase from Anaplasma phagocytophilum (strain HZ).